Here is an 821-residue protein sequence, read N- to C-terminus: Ent-isokaur-15-ene synthase (821 aa).

Mg(2+)-binding residues include aspartate 556, aspartate 560, asparagine 701, threonine 705, and glutamate 709. A DDXXD motif motif is present at residues aspartate 556–aspartate 560.

This sequence belongs to the terpene synthase family. Mg(2+) serves as cofactor.

It catalyses the reaction ent-copalyl diphosphate = ent-isokaurene + diphosphate. The protein operates within secondary metabolite biosynthesis; terpenoid biosynthesis. Functionally, involved in the biosynthesis of ent-kaurene diterpenoids natural products. Catalyzes the conversion of ent-copalyl diphosphate to the phytoalexin precursor ent-isokaur-15-ene. The chain is Ent-isokaur-15-ene synthase from Oryza sativa subsp. indica (Rice).